A 491-amino-acid chain; its full sequence is Aspartyl/glutamyl-tRNA(Asn/Gln) amidotransferase subunit B (491 aa).

Belongs to the GatB/GatE family. GatB subfamily. As to quaternary structure, heterotrimer of A, B and C subunits.

It carries out the reaction L-glutamyl-tRNA(Gln) + L-glutamine + ATP + H2O = L-glutaminyl-tRNA(Gln) + L-glutamate + ADP + phosphate + H(+). It catalyses the reaction L-aspartyl-tRNA(Asn) + L-glutamine + ATP + H2O = L-asparaginyl-tRNA(Asn) + L-glutamate + ADP + phosphate + 2 H(+). In terms of biological role, allows the formation of correctly charged Asn-tRNA(Asn) or Gln-tRNA(Gln) through the transamidation of misacylated Asp-tRNA(Asn) or Glu-tRNA(Gln) in organisms which lack either or both of asparaginyl-tRNA or glutaminyl-tRNA synthetases. The reaction takes place in the presence of glutamine and ATP through an activated phospho-Asp-tRNA(Asn) or phospho-Glu-tRNA(Gln). The sequence is that of Aspartyl/glutamyl-tRNA(Asn/Gln) amidotransferase subunit B from Burkholderia cenocepacia (strain ATCC BAA-245 / DSM 16553 / LMG 16656 / NCTC 13227 / J2315 / CF5610) (Burkholderia cepacia (strain J2315)).